The following is a 427-amino-acid chain: 3-phosphoshikimate 1-carboxyvinyltransferase (427 aa).

3-phosphoshikimate-binding residues include Lys-20, Ser-21, and Arg-25. Lys-20 is a phosphoenolpyruvate binding site. Residues Gly-92 and Arg-120 each coordinate phosphoenolpyruvate. 3-phosphoshikimate-binding residues include Ser-166, Gln-168, Asp-312, and Lys-339. Position 168 (Gln-168) interacts with phosphoenolpyruvate. Asp-312 functions as the Proton acceptor in the catalytic mechanism. Phosphoenolpyruvate contacts are provided by Arg-343 and Arg-385.

Belongs to the EPSP synthase family. Monomer.

The protein localises to the cytoplasm. It catalyses the reaction 3-phosphoshikimate + phosphoenolpyruvate = 5-O-(1-carboxyvinyl)-3-phosphoshikimate + phosphate. Its pathway is metabolic intermediate biosynthesis; chorismate biosynthesis; chorismate from D-erythrose 4-phosphate and phosphoenolpyruvate: step 6/7. Catalyzes the transfer of the enolpyruvyl moiety of phosphoenolpyruvate (PEP) to the 5-hydroxyl of shikimate-3-phosphate (S3P) to produce enolpyruvyl shikimate-3-phosphate and inorganic phosphate. The sequence is that of 3-phosphoshikimate 1-carboxyvinyltransferase from Streptococcus equi subsp. equi (strain 4047).